The primary structure comprises 257 residues: 7-carboxy-7-deazaguanine synthase (257 aa).

The tract at residues 1–25 (MKSVDHPVDVLPAEHSAETPGDARA) is disordered. Substrate contacts are provided by residues 39-41 (RQG) and Arg54. One can recognise a Radical SAM core domain in the interval 45–244 (LTGTESVFIR…AISRGYQYCD (200 aa)). [4Fe-4S] cluster contacts are provided by Cys58, Cys62, and Cys65. Thr67 contacts Mg(2+). Thr99 is a binding site for substrate. S-adenosyl-L-methionine is bound by residues Gly101 and 143–145 (SPK).

It belongs to the radical SAM superfamily. 7-carboxy-7-deazaguanine synthase family. As to quaternary structure, homodimer. The cofactor is [4Fe-4S] cluster. S-adenosyl-L-methionine is required as a cofactor. Requires Mg(2+) as cofactor.

It catalyses the reaction 6-carboxy-5,6,7,8-tetrahydropterin + H(+) = 7-carboxy-7-deazaguanine + NH4(+). It participates in purine metabolism; 7-cyano-7-deazaguanine biosynthesis. In terms of biological role, catalyzes the complex heterocyclic radical-mediated conversion of 6-carboxy-5,6,7,8-tetrahydropterin (CPH4) to 7-carboxy-7-deazaguanine (CDG), a step common to the biosynthetic pathways of all 7-deazapurine-containing compounds. The chain is 7-carboxy-7-deazaguanine synthase from Rhodopirellula baltica (strain DSM 10527 / NCIMB 13988 / SH1).